A 153-amino-acid polypeptide reads, in one-letter code: Methylglyoxal synthase (153 aa).

In terms of domain architecture, MGS-like spans 3 to 153 (DQVNRPKGVT…SYLSRDVPGN (151 aa)). Residues H19, K23, 45 to 48 (TGTT), and 65 to 66 (SG) contribute to the substrate site. Catalysis depends on D71, which acts as the Proton donor/acceptor. Residue H98 coordinates substrate.

It belongs to the methylglyoxal synthase family.

It carries out the reaction dihydroxyacetone phosphate = methylglyoxal + phosphate. In terms of biological role, catalyzes the formation of methylglyoxal from dihydroxyacetone phosphate. This chain is Methylglyoxal synthase, found in Hahella chejuensis (strain KCTC 2396).